Here is a 496-residue protein sequence, read N- to C-terminus: Angiopoietin-2 (496 aa).

Residues Met-1–Ala-18 form the signal peptide. N-linked (GlcNAc...) asparagine glycosylation is found at Asn-90, Asn-120, Asn-134, Asn-152, Asn-241, and Asn-304. Positions Ser-167–Gln-249 form a coiled coil. One can recognise a Fibrinogen C-terminal domain in the interval Lys-275–Asp-495. A disulfide bond links Cys-284 and Cys-313. Residues Asp-429, Asp-431, Cys-433, and Cys-435 each coordinate Ca(2+). Disulfide bonds link Cys-433/Cys-435 and Cys-437/Cys-450.

Interacts with TEK/TIE2, competing for the same binding site as ANGPT1. Interacts with ITGA5. Interacts with SVEP1/polydom. Interacts with THBD; this interaction significantly inhibits the generation of activated PC and TAFIa/CPB2 by the thrombin/thrombomodulin complex.

It is found in the secreted. Binds to TEK/TIE2, competing for the ANGPT1 binding site, and modulating ANGPT1 signaling. Can induce tyrosine phosphorylation of TEK/TIE2 in the absence of ANGPT1. In the absence of angiogenic inducers, such as VEGF, ANGPT2-mediated loosening of cell-matrix contacts may induce endothelial cell apoptosis with consequent vascular regression. In concert with VEGF, it may facilitate endothelial cell migration and proliferation, thus serving as a permissive angiogenic signal. Involved in the regulation of lymphangiogenesis. The chain is Angiopoietin-2 (ANGPT2) from Bos taurus (Bovine).